The primary structure comprises 353 residues: Thiamine-phosphate synthase (353 aa).

A unknown region spans residues 1–128; it reads MELMVVEADA…ASTAAEIRYG (128 aa). Residues 129-353 form a thiamine-phosphate synthase region; the sequence is LYDLEVRILE…ASRTLLQTLA (225 aa). Residues 185–189 and Asn-217 contribute to the 4-amino-2-methyl-5-(diphosphooxymethyl)pyrimidine site; that span reads QYRRK. Asp-218 and Asp-237 together coordinate Mg(2+). Ser-256 lines the 4-amino-2-methyl-5-(diphosphooxymethyl)pyrimidine pocket. 282–284 serves as a coordination point for 2-[(2R,5Z)-2-carboxy-4-methylthiazol-5(2H)-ylidene]ethyl phosphate; the sequence is TKT. Lys-285 provides a ligand contact to 4-amino-2-methyl-5-(diphosphooxymethyl)pyrimidine. Gly-312 contributes to the 2-[(2R,5Z)-2-carboxy-4-methylthiazol-5(2H)-ylidene]ethyl phosphate binding site.

Belongs to the thiamine-phosphate synthase family. Requires Mg(2+) as cofactor.

It catalyses the reaction 2-[(2R,5Z)-2-carboxy-4-methylthiazol-5(2H)-ylidene]ethyl phosphate + 4-amino-2-methyl-5-(diphosphooxymethyl)pyrimidine + 2 H(+) = thiamine phosphate + CO2 + diphosphate. The catalysed reaction is 2-(2-carboxy-4-methylthiazol-5-yl)ethyl phosphate + 4-amino-2-methyl-5-(diphosphooxymethyl)pyrimidine + 2 H(+) = thiamine phosphate + CO2 + diphosphate. It carries out the reaction 4-methyl-5-(2-phosphooxyethyl)-thiazole + 4-amino-2-methyl-5-(diphosphooxymethyl)pyrimidine + H(+) = thiamine phosphate + diphosphate. It functions in the pathway cofactor biosynthesis; thiamine diphosphate biosynthesis; thiamine phosphate from 4-amino-2-methyl-5-diphosphomethylpyrimidine and 4-methyl-5-(2-phosphoethyl)-thiazole: step 1/1. Functionally, condenses 4-methyl-5-(beta-hydroxyethyl)thiazole monophosphate (THZ-P) and 2-methyl-4-amino-5-hydroxymethyl pyrimidine pyrophosphate (HMP-PP) to form thiamine monophosphate (TMP). This chain is Thiamine-phosphate synthase, found in Synechococcus sp. (strain CC9311).